Here is a 436-residue protein sequence, read N- to C-terminus: Cyclin-dependent kinase 11B (436 aa).

The Nuclear localization signal signature appears at 25-30 (VKKNRK). A calmodulin-binding region spans residues 30-44 (KKLVKGLHRAGPPPE). Residues 79–364 (FQCLNRIEEG…AEDGLKHEYF (286 aa)) enclose the Protein kinase domain. ATP-binding positions include 85–93 (IEEGTYGVV) and lysine 108. Serine 123 is modified (phosphoserine; by CDK7). Threonine 129 carries the phosphothreonine; by CDK7 modification. The active-site Proton acceptor is the aspartate 203. Serine 230 is modified (phosphoserine). Tyrosine 235 is modified (phosphotyrosine). Threonine 236 bears the Phosphothreonine mark. Residue lysine 282 forms a Glycyl lysine isopeptide (Lys-Gly) (interchain with G-Cter in SUMO2) linkage. The interval 383-406 (SEQQCVKRGTSPKPPEGGLGYSQL) is disordered. Threonine 392 is subject to Phosphothreonine. The residue at position 393 (serine 393) is a Phosphoserine.

Belongs to the protein kinase superfamily. CMGC Ser/Thr protein kinase family. CDC2/CDKX subfamily. In terms of assembly, may interact PAK1 and RANBP9. p110C interacts with RNPS1. Interacts with CCND3. Interacts with CCNL1 and CCNL2. Forms complexes with pre-mRNA-splicing factors, including at least SRSF1, SRSF2 AND SRSF7/SLU7. It depends on Mg(2+) as a cofactor.

Its subcellular location is the cytoplasm. The protein resides in the nucleus membrane. It is found in the endomembrane system. It localises to the perinuclear region. The enzyme catalyses L-seryl-[protein] + ATP = O-phospho-L-seryl-[protein] + ADP + H(+). It carries out the reaction L-threonyl-[protein] + ATP = O-phospho-L-threonyl-[protein] + ADP + H(+). Its function is as follows. Plays multiple roles in cell cycle progression, cytokinesis and apoptosis. Involved in pre-mRNA splicing in a kinase activity-dependent manner. May act as a negative regulator of normal cell cycle progression. This is Cyclin-dependent kinase 11B (Cdk11b) from Rattus norvegicus (Rat).